The chain runs to 148 residues: Ergosterol biosynthetic protein 28 (148 aa).

At 1 to 25 (MFSLQDVITTTKTTLAAMPKGYLPK) the chain is on the cytoplasmic side. Residues 26 to 46 (WLLFISIVSVFNSIQTYVSGL) traverse the membrane as a helical segment. Residues 47 to 92 (ELTRKVYERKPTETTHLSARTFGTWTFISCVIRFYGAMYLNEPHIF) lie on the Lumenal side of the membrane. The chain crosses the membrane as a helical span at residues 93 to 113 (ELVFMSYMVALFHFGSELLIF). The Cytoplasmic portion of the chain corresponds to 114 to 120 (RTCKLGK). The chain crosses the membrane as a helical span at residues 121–136 (GFMGPLVVSTTSLVWM). Over 137–148 (YKQREYYTGVAW) the chain is Lumenal.

This sequence belongs to the ERG28 family. Heterotetramer of ERG25, ERG26, ERG27 and ERG28. ERG28 acts as a scaffold to tether ERG27 and other 4,4-demethylation-related enzymes, forming a demethylation enzyme complex, in the endoplasmic reticulum. Interacts with ERG25, ERG26 and ERG27. Also interacts with ERG1, ERG3, ERG5, ERG6 and ERG11.

Its subcellular location is the endoplasmic reticulum membrane. Part of the third module of ergosterol biosynthesis pathway that includes the late steps of the pathway. ERG28 has a role as a scaffold to help anchor the catalytic components of the C-4 demethylation complex ERG25, ERG26 and ERG27 to the endoplasmic reticulum. The third module or late pathway involves the ergosterol synthesis itself through consecutive reactions that mainly occur in the endoplasmic reticulum (ER) membrane. Firstly, the squalene synthase ERG9 catalyzes the condensation of 2 farnesyl pyrophosphate moieties to form squalene, which is the precursor of all steroids. Squalene synthase is crucial for balancing the incorporation of farnesyl diphosphate (FPP) into sterol and nonsterol isoprene synthesis. Secondly, the squalene epoxidase ERG1 catalyzes the stereospecific oxidation of squalene to (S)-2,3-epoxysqualene, which is considered to be a rate-limiting enzyme in steroid biosynthesis. Then, the lanosterol synthase ERG7 catalyzes the cyclization of (S)-2,3 oxidosqualene to lanosterol, a reaction that forms the sterol core. In the next steps, lanosterol is transformed to zymosterol through a complex process involving various demethylation, reduction and desaturation reactions. The lanosterol 14-alpha-demethylase ERG11 (also known as CYP51) catalyzes C14-demethylation of lanosterol to produce 4,4'-dimethyl cholesta-8,14,24-triene-3-beta-ol, which is critical for ergosterol biosynthesis. The C-14 reductase ERG24 reduces the C14=C15 double bond of 4,4-dimethyl-cholesta-8,14,24-trienol to produce 4,4-dimethyl-cholesta-8,24-dienol. 4,4-dimethyl-cholesta-8,24-dienol is substrate of the C-4 demethylation complex ERG25-ERG26-ERG27 in which ERG25 catalyzes the three-step monooxygenation required for the demethylation of 4,4-dimethyl and 4alpha-methylsterols, ERG26 catalyzes the oxidative decarboxylation that results in a reduction of the 3-beta-hydroxy group at the C-3 carbon to an oxo group, and ERG27 is responsible for the reduction of the keto group on the C-3. ERG28 has a role as a scaffold to help anchor ERG25, ERG26 and ERG27 to the endoplasmic reticulum and ERG29 regulates the activity of the iron-containing C4-methylsterol oxidase ERG25. Then, the sterol 24-C-methyltransferase ERG6 catalyzes the methyl transfer from S-adenosyl-methionine to the C-24 of zymosterol to form fecosterol. The C-8 sterol isomerase ERG2 catalyzes the reaction which results in unsaturation at C-7 in the B ring of sterols and thus converts fecosterol to episterol. The sterol-C5-desaturase ERG3 then catalyzes the introduction of a C-5 double bond in the B ring to produce 5-dehydroepisterol. The C-22 sterol desaturase ERG5 further converts 5-dehydroepisterol into ergosta-5,7,22,24(28)-tetraen-3beta-ol by forming the C-22(23) double bond in the sterol side chain. Finally, ergosta-5,7,22,24(28)-tetraen-3beta-ol is substrate of the C-24(28) sterol reductase ERG4 to produce ergosterol. The protein is Ergosterol biosynthetic protein 28 of Saccharomyces cerevisiae (strain ATCC 204508 / S288c) (Baker's yeast).